A 556-amino-acid chain; its full sequence is Arginine--tRNA ligase (556 aa).

The 'HIGH' region signature appears at 132-142 (ANPTGDLHLGH).

It belongs to the class-I aminoacyl-tRNA synthetase family. In terms of assembly, monomer.

The protein localises to the cytoplasm. The enzyme catalyses tRNA(Arg) + L-arginine + ATP = L-arginyl-tRNA(Arg) + AMP + diphosphate. The polypeptide is Arginine--tRNA ligase (Listeria monocytogenes serotype 4b (strain F2365)).